We begin with the raw amino-acid sequence, 389 residues long: tRNA-specific 2-thiouridylase MnmA (389 aa).

ATP contacts are provided by residues 34 to 41 and Leu60; that span reads AMSGGVDS. Cys128 acts as the Nucleophile in catalysis. A disulfide bond links Cys128 and Cys225. Residue Gly152 coordinates ATP. An interaction with tRNA region spans residues 174 to 176; the sequence is RDQ. The active-site Cysteine persulfide intermediate is the Cys225.

It belongs to the MnmA/TRMU family.

It localises to the cytoplasm. The catalysed reaction is S-sulfanyl-L-cysteinyl-[protein] + uridine(34) in tRNA + AH2 + ATP = 2-thiouridine(34) in tRNA + L-cysteinyl-[protein] + A + AMP + diphosphate + H(+). Catalyzes the 2-thiolation of uridine at the wobble position (U34) of tRNA, leading to the formation of s(2)U34. In Paracoccus denitrificans (strain Pd 1222), this protein is tRNA-specific 2-thiouridylase MnmA.